Reading from the N-terminus, the 234-residue chain is ATP-dependent dethiobiotin synthetase BioD (234 aa).

12-17 (DVGKTF) lines the ATP pocket. Thr-16 contributes to the Mg(2+) binding site. Lys-37 is an active-site residue. A substrate-binding site is contributed by Thr-41. ATP contacts are provided by residues Asp-54 and 115–118 (EGAG). Residues Asp-54 and Glu-115 each coordinate Mg(2+).

Belongs to the dethiobiotin synthetase family. In terms of assembly, homodimer. Requires Mg(2+) as cofactor.

Its subcellular location is the cytoplasm. The catalysed reaction is (7R,8S)-7,8-diammoniononanoate + CO2 + ATP = (4R,5S)-dethiobiotin + ADP + phosphate + 3 H(+). The protein operates within cofactor biosynthesis; biotin biosynthesis; biotin from 7,8-diaminononanoate: step 1/2. Its function is as follows. Catalyzes a mechanistically unusual reaction, the ATP-dependent insertion of CO2 between the N7 and N8 nitrogen atoms of 7,8-diaminopelargonic acid (DAPA, also called 7,8-diammoniononanoate) to form a ureido ring. The protein is ATP-dependent dethiobiotin synthetase BioD of Lysinibacillus sphaericus (Bacillus sphaericus).